A 247-amino-acid polypeptide reads, in one-letter code: Chromosome partition protein MukE (247 aa).

The interval 213–247 (AQSLQEEKNGLKDNMDQSAVENEQYFENEENEGIA) is disordered. The span at 217–227 (QEEKNGLKDNM) shows a compositional bias: basic and acidic residues. Residues 236 to 247 (QYFENEENEGIA) show a composition bias toward acidic residues.

This sequence belongs to the MukE family. As to quaternary structure, interacts, and probably forms a ternary complex, with MukF and MukB. The complex formation is stimulated by calcium or magnesium.

Its subcellular location is the cytoplasm. It is found in the nucleoid. Its function is as follows. Involved in chromosome condensation, segregation and cell cycle progression. May participate in facilitating chromosome segregation by condensation DNA from both sides of a centrally located replisome during cell division. Probably acts via its interaction with MukB and MukF. This chain is Chromosome partition protein MukE, found in Histophilus somni (strain 2336) (Haemophilus somnus).